The chain runs to 1118 residues: Cytospin-A (1118 aa).

4 disordered regions span residues M1–S50, K75–I175, S294–E324, and S359–E391. 3 stretches are compositionally biased toward low complexity: residues A34–A48, S80–A90, and K99–S113. A compositionally biased stretch (basic and acidic residues) spans S120 to R131. The segment covering N133–A145 has biased composition (polar residues). A compositionally biased stretch (basic and acidic residues) spans T158–S171. Residues K168–Q281 adopt a coiled-coil conformation. The segment covering S294–Q304 has biased composition (polar residues). Over residues S359 to E373 the composition is skewed to low complexity. S385, S386, and S390 each carry phosphoserine. 2 coiled-coil regions span residues A395–L450 and R488–V808. S869, S882, and S888 each carry phosphoserine. Residues E916–R999 form a disordered region. Over residues R947–S957 the composition is skewed to basic and acidic residues. Positions T972–R992 are enriched in low complexity. The 106-residue stretch at G1012–E1117 folds into the Calponin-homology (CH) domain.

It belongs to the cytospin-A family. As to quaternary structure, may interact with both microtubules and actin cytoskeleton.

The protein resides in the cytoplasm. The protein localises to the cytoskeleton. It localises to the spindle. It is found in the cell junction. Its subcellular location is the gap junction. Functionally, involved in cytokinesis and spindle organization. May play a role in actin cytoskeleton organization and microtubule stabilization and hence required for proper cell adhesion and migration. In Rattus norvegicus (Rat), this protein is Cytospin-A (Specc1l).